A 332-amino-acid chain; its full sequence is Glycerol-3-phosphate dehydrogenase [NAD(P)+] (332 aa).

The NADPH site is built by S15, W16, and K110. 3 residues coordinate sn-glycerol 3-phosphate: K110, G137, and S139. A141 lines the NADPH pocket. The sn-glycerol 3-phosphate site is built by K192, D245, S255, R256, and N257. K192 functions as the Proton acceptor in the catalytic mechanism. R256 contributes to the NADPH binding site. E282 lines the NADPH pocket.

This sequence belongs to the NAD-dependent glycerol-3-phosphate dehydrogenase family.

Its subcellular location is the cytoplasm. It carries out the reaction sn-glycerol 3-phosphate + NAD(+) = dihydroxyacetone phosphate + NADH + H(+). The catalysed reaction is sn-glycerol 3-phosphate + NADP(+) = dihydroxyacetone phosphate + NADPH + H(+). The protein operates within membrane lipid metabolism; glycerophospholipid metabolism. Its function is as follows. Catalyzes the reduction of the glycolytic intermediate dihydroxyacetone phosphate (DHAP) to sn-glycerol 3-phosphate (G3P), the key precursor for phospholipid synthesis. This chain is Glycerol-3-phosphate dehydrogenase [NAD(P)+], found in Coxiella burnetii (strain CbuG_Q212) (Coxiella burnetii (strain Q212)).